A 108-amino-acid chain; its full sequence is Pyrimidine/purine nucleoside phosphorylase (108 aa).

This sequence belongs to the nucleoside phosphorylase PpnP family.

It carries out the reaction a purine D-ribonucleoside + phosphate = a purine nucleobase + alpha-D-ribose 1-phosphate. The catalysed reaction is adenosine + phosphate = alpha-D-ribose 1-phosphate + adenine. It catalyses the reaction cytidine + phosphate = cytosine + alpha-D-ribose 1-phosphate. The enzyme catalyses guanosine + phosphate = alpha-D-ribose 1-phosphate + guanine. It carries out the reaction inosine + phosphate = alpha-D-ribose 1-phosphate + hypoxanthine. The catalysed reaction is thymidine + phosphate = 2-deoxy-alpha-D-ribose 1-phosphate + thymine. It catalyses the reaction uridine + phosphate = alpha-D-ribose 1-phosphate + uracil. The enzyme catalyses xanthosine + phosphate = alpha-D-ribose 1-phosphate + xanthine. In terms of biological role, catalyzes the phosphorolysis of diverse nucleosides, yielding D-ribose 1-phosphate and the respective free bases. Can use uridine, adenosine, guanosine, cytidine, thymidine, inosine and xanthosine as substrates. Also catalyzes the reverse reactions. This Acinetobacter baylyi (strain ATCC 33305 / BD413 / ADP1) protein is Pyrimidine/purine nucleoside phosphorylase.